Reading from the N-terminus, the 702-residue chain is MADTGLRRVVPSDLYPLVLRFLRDSQLSEVASKFAKATGATQQDANASSLLDIYSFWLNRSTKAPKVKLQSNGPVTKKAKKETSSSDSSEDSSEDEDKKAQGLPTQKAAAQVKRASVPQHAGKAAAKASESSSSEESSEEEEEDKKKKPVQQKAAKPQAKAVRPPAKKAESSESDSDSDSDSSSEEETPQTQKPKAAVAAKAQTKAEAKPGTPAKAQPKVANGKAAASSSSSSSSDDSEEEKKAAAPPKKTVPKKQVVAKAPVKVAAAPTQKSSSSEDSSSEEEEGQRQPMKKKAGPYSSVPPPSVPLPKKSPGTQAPKKAAAQTQPADSSDDSSDDSDSSSEEEKKPPAKTVVSKTPAKAAPVKKKAESSSDSSDSDSSEDEAPAKPVSTTKSPKPAVTPKPSAAKAVTTPKQPAGSNQKPQSRKADSSSSEEESSSSEEEEASKKSATTPKAKVTAKAAPAKQAPQAAGDSSSDSDSSSSEEEEKTPKPPAKKKAAGGAVSTPAPGKKAEAKSSSSSSSSSSEDSSEEEKKKKPKATTPKIQASKANGTPASLNGKAAKESEEEEEEEETEEKKKAAGTKPGSGKKRKQNETADEATTPQAKKVKLETPNTFPKRKKGERRASSPFRRVREEEIEVDSRVADNSFDAKRGAAGDWGERANQVLKFTKGKSFRHEKTKKKRGSYRGGSISVQVNSVKFDSE.

The LisH domain maps to 10 to 42; the sequence is VPSDLYPLVLRFLRDSQLSEVASKFAKATGATQ. N6-acetyllysine is present on lysine 33. Residues 65-635 are disordered; that stretch reads PKVKLQSNGP…SPFRRVREEE (571 aa). Residues lysine 68 and lysine 77 each participate in a glycyl lysine isopeptide (Lys-Gly) (interchain with G-Cter in SUMO2) cross-link. Acidic serine cluster repeat units lie at residues 85 to 96 and 130 to 141; these read SSDSSEDSSEDE and ESSSSEESSEEE. Positions 85-566 are 11 X 12 AA approximate repeats of an acidic serine cluster; that stretch reads SSDSSEDSSE…GKAAKESEEE (482 aa). Phosphoserine is present on serine 88. Diphosphoserine is present on residues serine 89 and serine 92. 2 positions are modified to phosphoserine; by CK2: serine 89 and serine 92. Position 93 is a phosphoserine (serine 93). Composition is skewed to low complexity over residues 123–135 and 151–164; these read KAAA…SSSE and QQKA…AVRP. Acidic residues predominate over residues 172-188; sequence SESDSDSDSDSSSEEET. One copy of the Acidic serine cluster 3 repeat lies at 176–187; it reads SDSDSDSSSEEE. Composition is skewed to low complexity over residues 189 to 205, 224 to 235, 245 to 278, and 308 to 329; these read PQTQ…AQTK, KAAASSSSSSSS, AAPP…SSED, and LPKK…QPAD. Glycyl lysine isopeptide (Lys-Gly) (interchain with G-Cter in SUMO2) cross-links involve residues lysine 195 and lysine 201. The interaction with RPA194 stretch occupies residues 215–390; the sequence is KAQPKVANGK…EDEAPAKPVS (176 aa). Acidic serine cluster repeat units lie at residues 232-241 and 273-284; these read SSSSDDSEEE and SSSSEDSSSEEE. The span at 330–342 shows a compositional bias: acidic residues; it reads SSDDSSDDSDSSS. An Acidic serine cluster 6 repeat occupies 334–345; that stretch reads SSDDSDSSSEEE. Residues lysine 351 and lysine 356 each participate in a glycyl lysine isopeptide (Lys-Gly) (interchain with G-Cter in SUMO2) cross-link. Over residues 353 to 362 the composition is skewed to low complexity; it reads VVSKTPAKAA. Phosphoserine occurs at positions 371, 372, and 375. An Acidic serine cluster 7 repeat occupies 372–383; that stretch reads SDSSDSDSSEDE. Glycyl lysine isopeptide (Lys-Gly) (interchain with G-Cter in SUMO2) cross-links involve residues lysine 396, lysine 402, lysine 407, and lysine 413. Positions 411–422 are enriched in polar residues; sequence TPKQPAGSNQKP. Lysine 421 carries the N6-acetyllysine; alternate modification. Residue lysine 421 forms a Glycyl lysine isopeptide (Lys-Gly) (interchain with G-Cter in SUMO1); alternate linkage. A Glycyl lysine isopeptide (Lys-Gly) (interchain with G-Cter in SUMO2); alternate cross-link involves residue lysine 421. Residues 431 to 442 form an Acidic serine cluster 8 repeat; the sequence is SSEEESSSSEEE. Positions 431–443 are enriched in acidic residues; it reads SSEEESSSSEEEE. Residues lysine 447 and lysine 459 each participate in a glycyl lysine isopeptide (Lys-Gly) (interchain with G-Cter in SUMO2) cross-link. Low complexity-rich tracts occupy residues 447–480 and 514–525; these read KSAT…SDSS and KSSSSSSSSSSE. 2 Acidic serine cluster repeats span residues 474 to 484 and 521 to 531; these read SSDSDSSSSEE and SSSSEDSSEEE. Positions 541–554 are enriched in polar residues; sequence PKIQASKANGTPAS. One copy of the Acidic serine cluster 11 repeat lies at 555–566; the sequence is LNGKAAKESEEE. Serine 563 is modified (phosphoserine). Over residues 563 to 572 the composition is skewed to acidic residues; that stretch reads SEEEEEEEET. A Glycyl lysine isopeptide (Lys-Gly) (interchain with G-Cter in SUMO1) cross-link involves residue lysine 575. Lysine 582 participates in a covalent cross-link: Glycyl lysine isopeptide (Lys-Gly) (interchain with G-Cter in SUMO2). A Phosphoserine modification is found at serine 585. A Phosphothreonine modification is found at threonine 594. Residue lysine 607 forms a Glycyl lysine isopeptide (Lys-Gly) (interchain with G-Cter in SUMO2) linkage. Residues threonine 610 and threonine 613 each carry the phosphothreonine modification. Lysine 616 is covalently cross-linked (Glycyl lysine isopeptide (Lys-Gly) (interchain with G-Cter in SUMO2)). 2 positions are modified to phosphoserine: serine 625 and serine 646. Lysine 650 participates in a covalent cross-link: Glycyl lysine isopeptide (Lys-Gly) (interchain with G-Cter in SUMO2). Lysine 666 is subject to N6-acetyllysine; alternate. Residue lysine 666 forms a Glycyl lysine isopeptide (Lys-Gly) (interchain with G-Cter in SUMO2); alternate linkage. Residue arginine 686 is modified to Omega-N-methylarginine. Serine 689 carries the post-translational modification Phosphoserine. Lysine 698 participates in a covalent cross-link: Glycyl lysine isopeptide (Lys-Gly) (interchain with G-Cter in SUMO2). Serine 701 is subject to Phosphoserine.

The protein belongs to the NOLC1 family. In terms of assembly, interacts with RNA polymerase I 194 kDa subunit (RPA194) and with casein kinase-II. Interacts with DKC1/NAP57, NOP58 and fibrillarin. In terms of processing, undergoes rapid and massive phosphorylation/dephosphorylation cycles on CK2 and PKC sites. NOLC1 is one of the mostly phosphorylated proteins in the cell. Pyrophosphorylated by 5-diphosphoinositol pentakisphosphate (5-IP7). Serine pyrophosphorylation is achieved by Mg(2+)-dependent, but enzyme independent transfer of a beta-phosphate from a inositol pyrophosphate to a pre-phosphorylated serine residue. Post-translationally, ubiquitinated. Monoubiquitination by the BCR(KBTBD8) complex promotes the formation of a NOLC1-TCOF1 complex that acts as a platform to connect RNA polymerase I with enzymes responsible for ribosomal processing and modification, leading to remodel the translational program of differentiating cells in favor of neural crest specification.

It localises to the nucleus. Its subcellular location is the nucleolus. The protein localises to the cytoplasm. Its function is as follows. Nucleolar protein that acts as a regulator of RNA polymerase I by connecting RNA polymerase I with enzymes responsible for ribosomal processing and modification. Required for neural crest specification: following monoubiquitination by the BCR(KBTBD8) complex, associates with TCOF1 and acts as a platform to connect RNA polymerase I with enzymes responsible for ribosomal processing and modification, leading to remodel the translational program of differentiating cells in favor of neural crest specification. Involved in nucleologenesis, possibly by playing a role in the maintenance of the fundamental structure of the fibrillar center and dense fibrillar component in the nucleolus. It has intrinsic GTPase and ATPase activities. This chain is Nucleolar and coiled-body phosphoprotein 1, found in Mus musculus (Mouse).